A 603-amino-acid polypeptide reads, in one-letter code: Elongation factor 4 (603 aa).

A tr-type G domain is found at 7–191; the sequence is SNIRNFSIVA…AIVTRLPPPK (185 aa). Residues 19–24 and 138–141 each bind GTP; these read DHGKST and NKVD.

The protein belongs to the TRAFAC class translation factor GTPase superfamily. Classic translation factor GTPase family. LepA subfamily.

The protein resides in the cell inner membrane. It carries out the reaction GTP + H2O = GDP + phosphate + H(+). Required for accurate and efficient protein synthesis under certain stress conditions. May act as a fidelity factor of the translation reaction, by catalyzing a one-codon backward translocation of tRNAs on improperly translocated ribosomes. Back-translocation proceeds from a post-translocation (POST) complex to a pre-translocation (PRE) complex, thus giving elongation factor G a second chance to translocate the tRNAs correctly. Binds to ribosomes in a GTP-dependent manner. In Bradyrhizobium diazoefficiens (strain JCM 10833 / BCRC 13528 / IAM 13628 / NBRC 14792 / USDA 110), this protein is Elongation factor 4.